We begin with the raw amino-acid sequence, 229 residues long: Ribonuclease 3 (229 aa).

The RNase III domain occupies 2 to 130 (FEKLQDVLCY…ILGAIFLDGG (129 aa)). E43 is a binding site for Mg(2+). Residue D47 is part of the active site. The Mg(2+) site is built by D116 and E119. Residue E119 is part of the active site. Positions 157–226 (DAKSTLQELT…AGLALELLEG (70 aa)) constitute a DRBM domain.

The protein belongs to the ribonuclease III family. As to quaternary structure, homodimer. It depends on Mg(2+) as a cofactor.

Its subcellular location is the cytoplasm. The catalysed reaction is Endonucleolytic cleavage to 5'-phosphomonoester.. In terms of biological role, digests double-stranded RNA. Involved in the processing of primary rRNA transcript to yield the immediate precursors to the large and small rRNAs (23S and 16S). Processes some mRNAs, and tRNAs when they are encoded in the rRNA operon. Processes pre-crRNA and tracrRNA of type II CRISPR loci if present in the organism. In Oleidesulfovibrio alaskensis (strain ATCC BAA-1058 / DSM 17464 / G20) (Desulfovibrio alaskensis), this protein is Ribonuclease 3.